Reading from the N-terminus, the 179-residue chain is tRNA-splicing endonuclease (179 aa).

Residues Y115, H125, and K156 contribute to the active site.

The protein belongs to the tRNA-intron endonuclease family. Archaeal short subfamily. In terms of assembly, homotetramer; although the tetramer contains four active sites, only two participate in the cleavage. Therefore, it should be considered as a dimer of dimers.

It carries out the reaction pretRNA = a 3'-half-tRNA molecule with a 5'-OH end + a 5'-half-tRNA molecule with a 2',3'-cyclic phosphate end + an intron with a 2',3'-cyclic phosphate and a 5'-hydroxyl terminus.. In terms of biological role, endonuclease that removes tRNA introns. Cleaves pre-tRNA at the 5'- and 3'-splice sites to release the intron. The products are an intron and two tRNA half-molecules bearing 2',3' cyclic phosphate and 5'-OH termini. Recognizes a pseudosymmetric substrate in which 2 bulged loops of 3 bases are separated by a stem of 4 bp. The polypeptide is tRNA-splicing endonuclease (endA) (Methanocaldococcus jannaschii (strain ATCC 43067 / DSM 2661 / JAL-1 / JCM 10045 / NBRC 100440) (Methanococcus jannaschii)).